A 240-amino-acid polypeptide reads, in one-letter code: Probable transcriptional regulatory protein HPG27_148 (240 aa).

It belongs to the TACO1 family.

It is found in the cytoplasm. This Helicobacter pylori (strain G27) protein is Probable transcriptional regulatory protein HPG27_148.